A 96-amino-acid polypeptide reads, in one-letter code: Mitochondrial import inner membrane translocase subunit Tim13-A (96 aa).

The Twin CX3C motif signature appears at 47–70 (CFRKCIGKPGGSLDNSEQKCIAMC). Cystine bridges form between Cys-47–Cys-70 and Cys-51–Cys-66.

This sequence belongs to the small Tim family. As to quaternary structure, heterohexamer; composed of 3 copies of TIMM8 (TIMM8A or TIMM8B) and 3 copies of TIMM13, named soluble 70 kDa complex. Associates with the TIM22 complex, whose core is composed of TIMM22.

The protein resides in the mitochondrion inner membrane. Functionally, mitochondrial intermembrane chaperone that participates in the import and insertion of some multi-pass transmembrane proteins into the mitochondrial inner membrane. Also required for the transfer of beta-barrel precursors from the TOM complex to the sorting and assembly machinery (SAM complex) of the outer membrane. Acts as a chaperone-like protein that protects the hydrophobic precursors from aggregation and guide them through the mitochondrial intermembrane space. The TIMM8-TIMM13 complex mediates the import of some proteins while the predominant TIMM9-TIMM10 70 kDa complex mediates the import of much more proteins. The protein is Mitochondrial import inner membrane translocase subunit Tim13-A (timm13-a) of Xenopus laevis (African clawed frog).